Here is a 540-residue protein sequence, read N- to C-terminus: Cystathionine gamma-synthase 1, chloroplastic (540 aa).

The transit peptide at 1 to 78 (MAVSSCARAF…RNCSNIGVAQ (78 aa)) directs the protein to the chloroplast. The pyridoxal 5'-phosphate site is built by Tyr-203, Arg-205, Gly-233, Met-234, Tyr-258, Ser-353, and Thr-355. The residue at position 356 (Lys-356) is an N6-(pyridoxal phosphate)lysine.

The protein belongs to the trans-sulfuration enzymes family. Forms homotetramers composed of 2 homodimers. Pyridoxal 5'-phosphate is required as a cofactor.

It localises to the plastid. The protein localises to the chloroplast. It carries out the reaction O-phospho-L-homoserine + L-cysteine = L,L-cystathionine + phosphate. The catalysed reaction is O-succinyl-L-homoserine + L-cysteine = L,L-cystathionine + succinate + H(+). The protein operates within amino-acid biosynthesis; L-methionine biosynthesis via de novo pathway; L-cystathionine from O-succinyl-L-homoserine: step 1/1. Irreversibly inactivated by DL-propargylglycine. Its function is as follows. Catalyzes the first committed step of methionine (Met) biosynthesis. Catalyzes the formation of L-cystathionine from homoserine esters and L-cysteine, via a gamma-replacement reaction. This Nicotiana tabacum (Common tobacco) protein is Cystathionine gamma-synthase 1, chloroplastic.